Here is a 59-residue protein sequence, read N- to C-terminus: Large ribosomal subunit protein bL32c (59 aa).

A disordered region spans residues S37 to K59.

The protein belongs to the bacterial ribosomal protein bL32 family.

It is found in the plastid. The protein resides in the chloroplast. This chain is Large ribosomal subunit protein bL32c (rpl32), found in Zea mays (Maize).